The chain runs to 3176 residues: Large tegument protein deneddylase (3176 aa).

Residues methionine 1–proline 12 show a composition bias toward polar residues. The segment at methionine 1 to alanine 28 is disordered. A deubiquitination activity region spans residues methionine 1 to leucine 268. The 218-residue stretch at leucine 41–phenylalanine 258 folds into the Peptidase C76 domain. Active-site residues include cysteine 61, aspartate 193, and histidine 195. Positions proline 319 to serine 342 are disordered. Tandem repeats lie at residues proline 335–alanine 339, proline 340–alanine 344, proline 345–alanine 349, proline 350–alanine 354, and proline 355–alanine 359. Residues proline 335–alanine 384 form a 10 X 5 AA approximate repeats of P-A-S-A-A region. A 6; approximate repeat occupies glutamine 360–alanine 364. The 7; approximate repeat unit spans residues proline 365–alanine 369. Tandem repeats lie at residues proline 370–alanine 374 and proline 375–alanine 379. Residues alanine 376–alanine 386 are compositionally biased toward low complexity. 6 disordered regions span residues alanine 376–leucine 683, leucine 928–arginine 950, alanine 1170–leucine 1193, leucine 1435–glutamate 1461, glycine 2610–arginine 3008, and threonine 3023–lysine 3043. Residues proline 380–alanine 384 form a 10; approximate repeat. The span at proline 457–proline 488 shows a compositional bias: pro residues. A compositionally biased stretch (low complexity) spans alanine 519–leucine 546. Pro residues predominate over residues alanine 579 to glutamine 636. The tract at residues serine 581 to alanine 611 is interaction with inner tegument protein. Positions alanine 1170 to alanine 1182 are enriched in low complexity. The span at serine 2619 to leucine 2630 shows a compositional bias: polar residues. Positions glutamate 2643–glycine 2654 are enriched in low complexity. Residues glutamine 2738–serine 2747 show a composition bias toward pro residues. Polar residues-rich tracts occupy residues serine 2761–serine 2772 and serine 2811–aspartate 2831. A compositionally biased stretch (basic and acidic residues) spans methionine 2839–glutamate 2854. Low complexity-rich tracts occupy residues alanine 2872–alanine 2886 and alanine 2901–alanine 2912.

This sequence belongs to the herpesviridae large tegument protein family. As to quaternary structure, interacts with host CUL1 and CUL4A; these interactions inhibit the E3 ligase activity of cullins. Interacts with inner tegument protein. Interacts with capsid vertex specific component CVC2. Interacts with the major capsid protein/MCP. Interacts with host TRIM25 and YWHAZ.

The protein localises to the virion tegument. It is found in the host cytoplasm. Its subcellular location is the host nucleus. It catalyses the reaction Thiol-dependent hydrolysis of ester, thioester, amide, peptide and isopeptide bonds formed by the C-terminal Gly of ubiquitin (a 76-residue protein attached to proteins as an intracellular targeting signal).. Functionally, large tegument protein that plays multiple roles in the viral cycle. During viral entry, remains associated with the capsid while most of the tegument is detached and participates in the capsid transport toward the host nucleus. Plays a role in the routing of the capsid at the nuclear pore complex and subsequent uncoating. Within the host nucleus, acts as a deneddylase and promotes the degradation of nuclear CRLs (cullin-RING ubiquitin ligases) and thereby stabilizes nuclear CRL substrates, while cytoplasmic CRLs remain unaffected. These modifications prevent host cell cycle S-phase progression and create a favorable environment allowing efficient viral genome replication. Participates later in the secondary envelopment of capsids. Indeed, plays a linker role for the association of the outer viral tegument to the capsids together with the inner tegument protein. Counteracts host TLR-mediated NF-kappa-B activation through both MYD88 and TICAM1-dependent pathways by interfering with 'Lys-63'- and 'Lys-48'-linked ubiquitination of signaling intermediates such as TRAF6 and IKBKG. Inhibits type I interferon production by forming a tri-molecular complex with host TRIM25 and 14-3-3 thereby promoting TRIM25 autoubiquitination and sequestration of the ligase into inactive protein aggregates. In turn, host RIGI is recruited to the complex but ubiquitination is severely impaired leading to inhibition of the pathway. Also catalyzes the removal of 'Lys-48'- and 'Lys-63'-linked ubiquitin chains on host TBK1 and STING1 suppressing cGAS-STING signaling in addition to the RIGI-MAVS pathway. Inhibits selective autophagy by deubiquitinating host SQSTM1. In turn, decreased SQSTM1 ubiquitination fails to recruit LC3 to SQSTM1-positive aggregates. In the host nucleus, deubiquitinates topoisomerase II subunits TOP2A and TOP2B thereby stabilizing SUMOylated TOP2 which halts the DNA damage response to TOP2-induced double strand DNA breaks and promotes cell survival. The protein is Large tegument protein deneddylase of Homo sapiens (Human).